The chain runs to 484 residues: Probable glycine dehydrogenase (decarboxylating) subunit 2 (484 aa).

At K264 the chain carries N6-(pyridoxal phosphate)lysine.

This sequence belongs to the GcvP family. C-terminal subunit subfamily. As to quaternary structure, the glycine cleavage system is composed of four proteins: P, T, L and H. In this organism, the P 'protein' is a heterodimer of two subunits. Requires pyridoxal 5'-phosphate as cofactor.

The enzyme catalyses N(6)-[(R)-lipoyl]-L-lysyl-[glycine-cleavage complex H protein] + glycine + H(+) = N(6)-[(R)-S(8)-aminomethyldihydrolipoyl]-L-lysyl-[glycine-cleavage complex H protein] + CO2. Its function is as follows. The glycine cleavage system catalyzes the degradation of glycine. The P protein binds the alpha-amino group of glycine through its pyridoxal phosphate cofactor; CO(2) is released and the remaining methylamine moiety is then transferred to the lipoamide cofactor of the H protein. The chain is Probable glycine dehydrogenase (decarboxylating) subunit 2 from Legionella pneumophila (strain Corby).